A 235-amino-acid chain; its full sequence is Large ribosomal subunit protein uL1 (235 aa).

It belongs to the universal ribosomal protein uL1 family. As to quaternary structure, part of the 50S ribosomal subunit.

In terms of biological role, binds directly to 23S rRNA. The L1 stalk is quite mobile in the ribosome, and is involved in E site tRNA release. Functionally, protein L1 is also a translational repressor protein, it controls the translation of the L11 operon by binding to its mRNA. In Mycobacterium tuberculosis (strain ATCC 25177 / H37Ra), this protein is Large ribosomal subunit protein uL1.